The chain runs to 427 residues: CD209 antigen (427 aa).

The Cytoplasmic portion of the chain corresponds to 1-37; that stretch reads MSDSKEPRLQQLGLLEEEQLRGLGFRQTRGYKSLAGC. Short sequence motifs (endocytosis signal) lie at residues 14–15, 16–18, and 31–34; these read LL, EEE, and YKSL. The chain crosses the membrane as a helical; Signal-anchor for type II membrane protein span at residues 38 to 58; that stretch reads LGHGPLVLQLLSFTLLAALLV. The Extracellular portion of the chain corresponds to 59–427; that stretch reads QVSKVPSSIS…ASATPNPPPE (369 aa). Residue asparagine 80 is glycosylated (N-linked (GlcNAc...) asparagine). Repeat copies occupy residues 96 to 118, 119 to 141, 142 to 164, 165 to 187, 188 to 210, 211 to 233, 234 to 256, and 257 to 280. The tract at residues 96–280 is 8 X approximate tandem repeats; that stretch reads KLQEIYQELT…AVERLCRRCP (185 aa). 3 disulfide bridges follow: cysteine 279–cysteine 290, cysteine 307–cysteine 400, and cysteine 379–cysteine 392. The C-type lectin domain maps to 286-401; sequence FQGNCYFMSN…CNLAKFWICK (116 aa). Glutamate 370, asparagine 372, valine 374, glutamate 377, asparagine 388, and aspartate 389 together coordinate Ca(2+).

As to quaternary structure, homotetramer. Interacts with C1QBP; the interaction is indicative for a C1q:C1QBP:CD209 signaling complex. Interacts with ICAM2 and ICAM3 by binding to mannose-like carbohydrates. Interacts (via C-type lectin domain) with CEACAM1 (via Lewis X moieties); this interaction is regulated by the glycosylation pattern of CEACAM1 on cell types and regulates contact between dendritic cells and neutrophils.

It localises to the membrane. Its function is as follows. Pathogen-recognition receptor expressed on the surface of immature dendritic cells (DCs) and involved in initiation of primary immune response. Thought to mediate the endocytosis of pathogens which are subsequently degraded in lysosomal compartments. The receptor returns to the cell membrane surface and the pathogen-derived antigens are presented to resting T-cells via MHC class II proteins to initiate the adaptive immune response. Probably recognizes in a calcium-dependent manner high mannose N-linked oligosaccharides in a variety of pathogen antigens. In terms of biological role, on DCs it is a high affinity receptor for ICAM2 and ICAM3 by binding to mannose-like carbohydrates. May act as a DC rolling receptor that mediates transendothelial migration of DC presursors from blood to tissues by binding endothelial ICAM2. Seems to regulate DC-induced T-cell proliferation by binding to ICAM3 on T-cells in the immunological synapse formed between DC and T-cells. This Gorilla gorilla gorilla (Western lowland gorilla) protein is CD209 antigen (CD209).